The primary structure comprises 692 residues: Catalase-B (692 aa).

Catalysis depends on residues His-69 and Asn-142. A heme-binding site is contributed by Tyr-356.

It belongs to the catalase family. Heme serves as cofactor.

It is found in the cytoplasm. It catalyses the reaction 2 H2O2 = O2 + 2 H2O. Its function is as follows. Occurs in almost all aerobically respiring organisms and serves to protect cells from the toxic effects of hydrogen peroxide. Its accumulation in prespore cells affords the spores protection from oxidation during prolonged dormancy. Required for normal developmental timing, possibly through a regulatory role in differentiation and morphogenesis. The polypeptide is Catalase-B (catB) (Dictyostelium discoideum (Social amoeba)).